Reading from the N-terminus, the 392-residue chain is Chloramphenicol resistance protein (392 aa).

The next 12 helical transmembrane spans lie at 6–26 (YLLA…AGLV), 42–62 (TLTS…AALA), 71–91 (LLGF…TTSF), 100–120 (VAAL…AALV), 129–149 (LAVL…GGSL), 160–180 (FWAV…AIPA), 205–225 (LLLA…SFTF), 239–259 (LWIS…VTVA), 268–288 (AQVL…LAML), 294–314 (ALLT…STLI), 332–352 (ATAA…TTLG), and 358–378 (LGPL…AFPF).

This sequence belongs to the major facilitator superfamily.

It localises to the cell membrane. The sequence is that of Chloramphenicol resistance protein (cmlR) from Streptomyces lividans.